We begin with the raw amino-acid sequence, 164 residues long: Nucleotide-binding protein Acid345_2028 (164 aa).

This sequence belongs to the YajQ family.

In terms of biological role, nucleotide-binding protein. This chain is Nucleotide-binding protein Acid345_2028, found in Koribacter versatilis (strain Ellin345).